The primary structure comprises 440 residues: MSVASDSPVHSSSSSDDLAAFLDAELDSASDASSGPSEEEEAEDDVESGLKRQKLEHLEEASSSKGECEHPGSFGNMCFVCGQKLEETGVSFRYIHKEMRLNEDEISRLRDSDSRFLQRQRKLYLVLDLDHTLLNTTILRDLKPEEEYLKSHTHSLQDGCNVSGGSLFLLEFMQMMTKLRPFVHSFLKEASEMFVMYIYTMGDRNYARQMAKLLDPKGEYFGDRVISRDDGTVRHEKSLDVVLGQESAVLILDDTENAWPKHKDNLIVIERYHFFSSSCRQFDHRYKSLSELKSDESEPDGALATVLKVLKQAHALFFENVDEGISNRDVRLMLKQVRKEILKGCKIVFSRVFPTKAKPEDHPLWKMAEELGATCATEVDASVTHVVAMDVGTEKARWAVREKKYVVHRGWIDAANYLWMKQPEENFGLEQLKKQLTEEE.

Residues 1–36 (MSVASDSPVHSSSSSDDLAAFLDAELDSASDASSGP) are compositionally biased toward low complexity. A disordered region spans residues 1-49 (MSVASDSPVHSSSSSDDLAAFLDAELDSASDASSGPSEEEEAEDDVESG). Residues 37–47 (SEEEEAEDDVE) show a composition bias toward acidic residues. The FCP1 homology domain occupies 118–292 (QRQRKLYLVL…DHRYKSLSEL (175 aa)). The BRCT domain maps to 337–429 (VRKEILKGCK…MKQPEENFGL (93 aa)).

In terms of assembly, interacts with RAP74. It depends on Mg(2+) as a cofactor. Requires Co(2+) as cofactor. Mn(2+) serves as cofactor.

The protein resides in the nucleus. It catalyses the reaction O-phospho-L-seryl-[protein] + H2O = L-seryl-[protein] + phosphate. It carries out the reaction O-phospho-L-threonyl-[protein] + H2O = L-threonyl-[protein] + phosphate. In terms of biological role, processively dephosphorylates 'Ser-2' and/or 'Ser-5' of the heptad repeats YSPTSPS in the C-terminal domain of the largest RNA polymerase II subunit (RPB1). This promotes the activity of RNA polymerase II. Required for normal plant growth. The protein is RNA polymerase II C-terminal domain phosphatase-like 4 (CPL4) of Arabidopsis thaliana (Mouse-ear cress).